The following is a 494-amino-acid chain: Probable serine/threonine-protein kinase BSK3 (494 aa).

The N-myristoyl glycine moiety is linked to residue G2. The Protein kinase domain occupies 61-316 (ENIVSEHGEK…SLVQALAPLQ (256 aa)). ATP is bound by residues 67–75 (HGEKAPNVV) and K89. Residue D183 is the Proton acceptor of the active site. A phosphoserine mark is found at S213 and S215. The stretch at 423 to 456 (PTIYARRCLSYLMNDKAEQALSDAMQALVISPTW) is one TPR repeat.

As to quaternary structure, interacts with BRI1 and BSL1. In terms of processing, phosphorylated at Ser-213 and Ser-215 by BRI1. Phosphorylation at Ser-215 is required for its function in the regulation of brassinosteroid signaling. Phosphorylation by BRI1 disrupts the interaction between its TPR and kinase domains, thereby increasing the binding between its kinase domain and BSL1.

It is found in the cell membrane. It carries out the reaction L-seryl-[protein] + ATP = O-phospho-L-seryl-[protein] + ADP + H(+). The enzyme catalyses L-threonyl-[protein] + ATP = O-phospho-L-threonyl-[protein] + ADP + H(+). Functionally, probable serine/threonine kinase that acts as a positive regulator of brassinosteroid (BR) signaling downstream of BRI1. The chain is Probable serine/threonine-protein kinase BSK3 from Oryza sativa subsp. japonica (Rice).